Here is a 487-residue protein sequence, read N- to C-terminus: GTPase Der (487 aa).

In terms of domain architecture, EngA-type G 1 spans 2–166; it reads LKIAILGRPN…RIKLVANLPE (165 aa). GTP contacts are provided by residues 8–15, 55–59, and 118–121; these read GRPNVGKS, DTGGV, and NKAD. Residues 165–194 are disordered; sequence PEPREEEEEGLEELSVDEHEESEAALPSNT. Residues 168 to 187 show a composition bias toward acidic residues; sequence REEEEEGLEELSVDEHEESE. Residues 225–398 enclose the EngA-type G 2 domain; the sequence is LKIALIGRPN…AIDELHHVVS (174 aa). GTP-binding positions include 231–238, 278–282, and 343–346; these read GRPNVGKS, DTAGL, and NKWD. Positions 399–483 constitute a KH-like domain; it reads NKVPTPIVNK…PFDLEFKEKP (85 aa).

The protein belongs to the TRAFAC class TrmE-Era-EngA-EngB-Septin-like GTPase superfamily. EngA (Der) GTPase family. In terms of assembly, associates with the 50S ribosomal subunit.

GTPase that plays an essential role in the late steps of ribosome biogenesis. This is GTPase Der from Chlamydia pneumoniae (Chlamydophila pneumoniae).